The chain runs to 398 residues: 1-deoxy-D-xylulose 5-phosphate reductoisomerase (398 aa).

Threonine 10, glycine 11, serine 12, isoleucine 13, asparagine 38, and asparagine 124 together coordinate NADPH. 1-deoxy-D-xylulose 5-phosphate is bound at residue lysine 125. Glutamate 126 contributes to the NADPH binding site. Aspartate 150 provides a ligand contact to Mn(2+). The 1-deoxy-D-xylulose 5-phosphate site is built by serine 151, glutamate 152, serine 176, and histidine 199. Glutamate 152 provides a ligand contact to Mn(2+). An NADPH-binding site is contributed by glycine 205. 1-deoxy-D-xylulose 5-phosphate-binding residues include serine 212, asparagine 217, lysine 218, and glutamate 221. Glutamate 221 contributes to the Mn(2+) binding site.

It belongs to the DXR family. It depends on Mg(2+) as a cofactor. Mn(2+) serves as cofactor.

The enzyme catalyses 2-C-methyl-D-erythritol 4-phosphate + NADP(+) = 1-deoxy-D-xylulose 5-phosphate + NADPH + H(+). It functions in the pathway isoprenoid biosynthesis; isopentenyl diphosphate biosynthesis via DXP pathway; isopentenyl diphosphate from 1-deoxy-D-xylulose 5-phosphate: step 1/6. Catalyzes the NADPH-dependent rearrangement and reduction of 1-deoxy-D-xylulose-5-phosphate (DXP) to 2-C-methyl-D-erythritol 4-phosphate (MEP). The protein is 1-deoxy-D-xylulose 5-phosphate reductoisomerase of Rippkaea orientalis (strain PCC 8801 / RF-1) (Cyanothece sp. (strain PCC 8801)).